The primary structure comprises 208 residues: Translation initiation factor 6 (208 aa).

This sequence belongs to the eIF-6 family.

Functionally, binds to the 50S ribosomal subunit and prevents its association with the 30S ribosomal subunit to form the 70S initiation complex. The chain is Translation initiation factor 6 (eif6) from Nanoarchaeum equitans (strain Kin4-M).